A 67-amino-acid polypeptide reads, in one-letter code: Neurotoxin Cex9 (67 aa).

The region spanning 1 to 65 is the LCN-type CS-alpha/beta domain; that stretch reads KDGYPVEVTG…TWPLPNKSCG (65 aa). 4 cysteine pairs are disulfide-bonded: Cys-11–Cys-64, Cys-15–Cys-40, Cys-24–Cys-45, and Cys-28–Cys-47. Residue Cys-64 is modified to Cysteine amide. The propeptide occupies 65 to 67; the sequence is GKK.

Belongs to the long (4 C-C) scorpion toxin superfamily. Sodium channel inhibitor family. Beta subfamily. In terms of tissue distribution, expressed by the venom gland.

It is found in the secreted. Its function is as follows. Beta toxins bind voltage-independently at site-4 of sodium channels (Nav) and shift the voltage of activation toward more negative potentials thereby affecting sodium channel activation and promoting spontaneous and repetitive firing. This Centruroides exilicauda (Bark scorpion) protein is Neurotoxin Cex9.